The following is a 561-amino-acid chain: Putative transport protein YbjL (561 aa).

5 consecutive transmembrane segments (helical) span residues 8-28 (LLNGNYILLLFVVLALGLCLG), 32-52 (LGSIQLGNSIGVLVVSLLLGQ), 66-86 (FMLFIFCVGVEAGPNFFSIFF), 94-114 (MLALVMVGSALVIALGLGKLF), and 158-178 (NLSLGYALTYLIGLVSLIVGA). RCK C-terminal domains lie at 200 to 288 (RGLD…SFRN) and 292 to 373 (VFDR…RIGF). Helical transmembrane passes span 383 to 403 (LLAFCAFFVIGLMIGMITFQF), 406 to 426 (FSFGMGNAAGLLFAGIMLGFM), 451 to 471 (VFMAGVGLSAGSGINNGLGAI), 475 to 495 (MLIAGLIVSLVPVVICFLFGA), and 540 to 560 (AIANVLLTLAGTIIVMVWPGL).

This sequence belongs to the AAE transporter (TC 2.A.81) family. YbjL subfamily.

The protein localises to the cell membrane. In Escherichia coli O127:H6 (strain E2348/69 / EPEC), this protein is Putative transport protein YbjL.